A 1031-amino-acid polypeptide reads, in one-letter code: Probable ATP-dependent RNA helicase DDX46 (1031 aa).

Residues 1–24 (MGRESRHYRKRSASRGRSGSRSRS) are compositionally biased toward basic residues. The interval 1–228 (MGRESRHYRK…EMEGEELDPL (228 aa)) is disordered. The N-myristoyl glycine moiety is linked to residue Gly2. Basic and acidic residues predominate over residues 26-49 (SPSDKRSKRGDDRRSRSRDRDRRR). Basic residues-rich tracts occupy residues 50-73 (ERSRSRDKRRSRSRDRKRLRRSRS) and 81-103 (ERRRSRSRDRRRSRSRSRGRRSR). Basic and acidic residues predominate over residues 112-200 (KKTENRSRSK…EMKQGKKWSL (89 aa)). Positions 152-197 (DQNKLEEEMRKRKERVEKWREEQRKKAMENIGELKKEIEEMKQGKK) form a coiled coil. Lys186 participates in a covalent cross-link: Glycyl lysine isopeptide (Lys-Gly) (interchain with G-Cter in SUMO2). Ser199 is subject to Phosphoserine. Composition is skewed to acidic residues over residues 201–211 (EDDDDDEDDPA) and 219–228 (EMEGEELDPL). Position 263 is an N6-acetyllysine (Lys263). The residue at position 294 (Tyr294) is a Phosphotyrosine. Phosphoserine is present on residues Ser295 and Ser296. Residue Lys325 forms a Glycyl lysine isopeptide (Lys-Gly) (interchain with G-Cter in SUMO2) linkage. Ser346 carries the phosphoserine modification. Positions 372–400 (KSWVQCGISMKILNSLKKHGYEKPTPIQT) match the Q motif motif. The Helicase ATP-binding domain occupies 403 to 581 (IPAIMSGRDL…RRILSKPIEV (179 aa)). Position 416–423 (416–423 (AKTGSGKT)) interacts with ATP. The short motif at 529–532 (DEAD) is the DEAD box element. The region spanning 592–753 (DVEQQVIVIE…AVPPDLEKLW (162 aa)) is the Helicase C-terminal domain. Lys776 carries the post-translational modification N6-acetyllysine. A Glycyl lysine isopeptide (Lys-Gly) (interchain with G-Cter in SUMO2) cross-link involves residue Lys779. The residue at position 804 (Ser804) is a Phosphoserine. An N6-acetyllysine modification is found at Lys903. Glycyl lysine isopeptide (Lys-Gly) (interchain with G-Cter in SUMO2) cross-links involve residues Lys907 and Lys915. Residue Ser928 is modified to Phosphoserine.

Belongs to the DEAD box helicase family. DDX46/PRP5 subfamily. As to quaternary structure, component of the 17S U2 SnRNP complex, a ribonucleoprotein complex that contains small nuclear RNA (snRNA) U2 and a number of specific proteins. Within the 17S U2 SnRNP complex, DDX46 is part of the SF3B subcomplex, which is required for 'A' complex assembly formed by the stable binding of U2 snRNP to the branchpoint sequence in pre-mRNA. Recruited to the 17S U2 SnRNP complex following release of DDX42; DDX42 and DDX46 bind the SF3B subcomplex in a competitive manner.

It is found in the nucleus speckle. Its subcellular location is the nucleus. It localises to the cajal body. It carries out the reaction ATP + H2O = ADP + phosphate + H(+). Functionally, component of the 17S U2 SnRNP complex of the spliceosome, a large ribonucleoprotein complex that removes introns from transcribed pre-mRNAs. The 17S U2 SnRNP complex (1) directly participates in early spliceosome assembly and (2) mediates recognition of the intron branch site during pre-mRNA splicing by promoting the selection of the pre-mRNA branch-site adenosine, the nucleophile for the first step of splicing. Within the 17S U2 SnRNP complex, DDX46 plays essential roles during assembly of pre-spliceosome and proofreading of the branch site. This Homo sapiens (Human) protein is Probable ATP-dependent RNA helicase DDX46.